The primary structure comprises 391 residues: Probable dual-specificity RNA methyltransferase RlmN (391 aa).

Residues 1–33 (MTTPLDTPTREPLPLAPAGPGKLVMSAPRRGKP) are disordered. The segment covering 12–21 (PLPLAPAGPG) has biased composition (low complexity). Glu-124 functions as the Proton acceptor in the catalytic mechanism. Residues 130 to 373 (YKNRDTICIS…TTVRDTRGSD (244 aa)) enclose the Radical SAM core domain. Cys-137 and Cys-378 are joined by a disulfide. [4Fe-4S] cluster is bound by residues Cys-144, Cys-148, and Cys-151. S-adenosyl-L-methionine-binding positions include 199–200 (GE), Ser-233, 256–258 (SLH), and Asn-335. Cys-378 acts as the S-methylcysteine intermediate in catalysis.

The protein belongs to the radical SAM superfamily. RlmN family. It depends on [4Fe-4S] cluster as a cofactor.

The protein resides in the cytoplasm. The enzyme catalyses adenosine(2503) in 23S rRNA + 2 reduced [2Fe-2S]-[ferredoxin] + 2 S-adenosyl-L-methionine = 2-methyladenosine(2503) in 23S rRNA + 5'-deoxyadenosine + L-methionine + 2 oxidized [2Fe-2S]-[ferredoxin] + S-adenosyl-L-homocysteine. It catalyses the reaction adenosine(37) in tRNA + 2 reduced [2Fe-2S]-[ferredoxin] + 2 S-adenosyl-L-methionine = 2-methyladenosine(37) in tRNA + 5'-deoxyadenosine + L-methionine + 2 oxidized [2Fe-2S]-[ferredoxin] + S-adenosyl-L-homocysteine. Functionally, specifically methylates position 2 of adenine 2503 in 23S rRNA and position 2 of adenine 37 in tRNAs. This Kineococcus radiotolerans (strain ATCC BAA-149 / DSM 14245 / SRS30216) protein is Probable dual-specificity RNA methyltransferase RlmN.